Here is a 345-residue protein sequence, read N- to C-terminus: Opioid-binding protein/cell adhesion molecule (345 aa).

The N-terminal stretch at 1–27 (MGVCGSLFQPWKCLVVVSLRLLFLVPT) is a signal peptide. Ig-like C2-type domains are found at residues 39–126 (PKAM…PKTS), 136–219 (PQIM…VKIT), and 223–310 (PPYI…ASIT). Residues Asn-44, Asn-70, and Asn-140 are each glycosylated (N-linked (GlcNAc...) asparagine). Cysteines 57 and 115 form a disulfide. Disulfide bonds link Cys-157–Cys-202 and Cys-244–Cys-296. N-linked (GlcNAc...) asparagine glycans are attached at residues Asn-285, Asn-293, and Asn-306. Asn-322 carries the GPI-anchor amidated asparagine lipid modification. Positions 323 to 345 (SASRALACLWLSGTLFAHFFIKF) are cleaved as a propeptide — removed in mature form.

The protein belongs to the immunoglobulin superfamily. IgLON family.

The protein resides in the cell membrane. Binds opioids in the presence of acidic lipids; probably involved in cell contact. The protein is Opioid-binding protein/cell adhesion molecule (OPCML) of Bos taurus (Bovine).